The following is a 734-amino-acid chain: Homoaconitase, mitochondrial (734 aa).

The transit peptide at 1-25 (MGASNLLRFGAVTRISTPLLSRRSL) directs the protein to the mitochondrion. Positions 367, 427, and 430 each coordinate [4Fe-4S] cluster.

This sequence belongs to the aconitase/IPM isomerase family. The cofactor is [4Fe-4S] cluster.

It is found in the mitochondrion. The catalysed reaction is (2R,3S)-homoisocitrate = cis-homoaconitate + H2O. It functions in the pathway amino-acid biosynthesis; L-lysine biosynthesis via AAA pathway; L-alpha-aminoadipate from 2-oxoglutarate: step 3/5. Functionally, catalyzes the reversible hydration of cis-homoaconitate to (2R,3S)-homoisocitrate, a step in the alpha-aminoadipate pathway for lysine biosynthesis. The protein is Homoaconitase, mitochondrial (LYS4) of Mycosarcoma maydis (Corn smut fungus).